We begin with the raw amino-acid sequence, 790 residues long: Transient receptor potential cation channel subfamily V member 3 (790 aa).

Residues 1-430 are Cytoplasmic-facing; sequence MKAHPKEMVP…TLEPLHTLLH (430 aa). Disordered regions lie at residues 15–34, 52–71, and 76–112; these read RVAA…PAEI, PNPT…MDSN, and ISGN…KEEQ. The span at 95-105 shows a compositional bias: polar residues; the sequence is ETPSNPNSPSA. 7 ANK repeats span residues 117-148, 170-198, 214-243, 261-291, 298-330, 340-362, and 398-420; these read RRLK…LCRR, TCLM…EEND, EGQT…DVNA, FGET…DITS, NILH…RSGN, DGLT…YILS, and TTDN…HEML. A helical transmembrane segment spans residues 431-460; it reads MKWKKFAKHMFFLSFCFYFFYNITLTLVSY. Over 461–479 the chain is Extracellular; that stretch reads YRPREEEAIPHPLALTHKM. Residues 480–508 form a helical membrane-spanning segment; the sequence is GWLQLLGRMFVLIWAMCISVKEGIAIFLL. The Cytoplasmic segment spans residues 509–519; the sequence is RPSDLQSILSD. The chain crosses the membrane as a helical span at residues 520-540; that stretch reads AWFHFVFFIQAVLVILSVFLY. Over 541–545 the chain is Extracellular; the sequence is LFAYK. The helical transmembrane segment at 546–566 threads the bilayer; that stretch reads EYLACLVLAMALGWANMLYYT. Residues 567–569 are Cytoplasmic-facing; the sequence is RGF. A helical membrane pass occupies residues 570 to 608; it reads QSMGMYSVMIQKVILHDVLKFLFVYIVFLLGFGVALASL. Residues 609–620 lie on the Extracellular side of the membrane; the sequence is IEKCPKDNKDCS. Residues 621–646 constitute an intramembrane region (pore-forming); that stretch reads SYGSFSDAVLELFKLTIGLGDLNIQQ. Glycine 638 provides a ligand contact to Na(+). Residues 647–649 lie on the Extracellular side of the membrane; that stretch reads NSK. Residues 650–686 traverse the membrane as a helical segment; that stretch reads YPILFLFLLITYVILTFVLLLNMLIALMGETVENVSK. Over 687–790 the chain is Cytoplasmic; the sequence is ESERIWRLQR…EVEEFPETSV (104 aa).

The protein belongs to the transient receptor (TC 1.A.4) family. TrpV subfamily. TRPV3 sub-subfamily. As to quaternary structure, homotetramer. May convert from a homotetramer to a homopentamer to allow pore dilation. Interacts with TRPV1; may form a heteromeric channel with TRPV1. Interacts with SNX11; this interaction promotes TRPV3 trafficking from the cell membrane to lysosome for degradation. As to expression, abundantly expressed in CNS. Widely expressed at low levels. Detected in dorsal root ganglion (at protein level). Expressed in the keratinocyte layers of the outer root sheath and, to lesser extent, to the matrix of the hair follicles (at protein level).

The protein localises to the cell membrane. Its subcellular location is the cytoplasm. The protein resides in the lysosome. It catalyses the reaction Ca(2+)(in) = Ca(2+)(out). The enzyme catalyses Mg(2+)(in) = Mg(2+)(out). It carries out the reaction Na(+)(in) = Na(+)(out). The catalysed reaction is K(+)(in) = K(+)(out). Its activity is regulated as follows. Activated by cannabinoid that binds to the vanilloid binding pocket. Diphenylboronic anhydride induces pore dilation and enhances cation permeability by promoting the conversion to a homopentamer. In terms of biological role, non-selective calcium permeant cation channel. It is activated by innocuous (warm) temperatures and shows an increased response at noxious temperatures greater than 39 degrees Celsius. Activation exhibits an outward rectification. The channel pore can dilate to provide permeability to larger cations. May associate with TRPV1 and may modulate its activity. Is a negative regulator of hair growth and cycling: TRPV3-coupled signaling suppresses keratinocyte proliferation in hair follicles and induces apoptosis and premature hair follicle regression (catagen). The polypeptide is Transient receptor potential cation channel subfamily V member 3 (TRPV3) (Homo sapiens (Human)).